Reading from the N-terminus, the 181-residue chain is UPF0302 protein LMHCC_0635 (181 aa).

The protein belongs to the UPF0302 family.

In Listeria monocytogenes serotype 4a (strain HCC23), this protein is UPF0302 protein LMHCC_0635.